The primary structure comprises 591 residues: Melatonin-related receptor (591 aa).

Topologically, residues 1-38 (MATVPKSNMGPTKAVPTPFGCIGCKLPKPDYPPALIIF) are extracellular. The chain crosses the membrane as a helical span at residues 39–59 (MFCAMVITVVVDLIGNSMVIL). The Cytoplasmic segment spans residues 60 to 72 (AVTKNKKLRNSGN). The helical transmembrane segment at 73-93 (IFVASLSVADMLVAIYPYPLM) threads the bilayer. At 94 to 111 (LYAMSVGGWDLSQLQCQM) the chain is on the extracellular side. A disulfide bond links Cys109 and Cys186. The helical transmembrane segment at 112-132 (VGLVTGLSVVGSIFNITAIAI) threads the bilayer. At 133 to 151 (NRYCYICHSLQYKRIFSLR) the chain is on the cytoplasmic side. Residues 152–172 (NTCIYLVVTWVMTVLAVLPNM) form a helical membrane-spanning segment. Residues 173–196 (YIGTIEYDPRTYTCIFNYVNNPAF) lie on the Extracellular side of the membrane. Residues 197–217 (TVTIVCIHFVLPLIIVGYCYT) traverse the membrane as a helical segment. Topologically, residues 218-247 (KIWIKVLAARDPAGQNPDNQFAEVRNFLTM) are cytoplasmic. The helical transmembrane segment at 248-268 (FVIFLLFAVCWCPVNVLTVLV) threads the bilayer. The Extracellular segment spans residues 269–281 (AVIPKEMAGKIPN). The helical transmembrane segment at 282-302 (WLYLAAYCIAYFNSCLNAIIY) threads the bilayer. The Cytoplasmic segment spans residues 303–591 (GILNESFRRE…DSDCSDEMAV (289 aa)). Residues 378-427 (LPGDASAPHSDRASVRPKPQTRSTSVYRKPASIHHKSISGHPKSASVYPK) are disordered.

The protein belongs to the G-protein coupled receptor 1 family. As to quaternary structure, homodimer, and heterodimer with MTNR1A and MTNR1B. Interacts with KAT5. Interacts with RTN4 isoform A/NOGO-A. Interacts with TGFBR1. As to expression, strongly expressed in the brain with highly restricted pattern of expression, confined to a subset of the ependymal cells of the third ventricle and a population of cells in the dorsomedial hypothalamic nucleus.

The protein resides in the cell membrane. It is found in the postsynaptic density. G protein-coupled receptor that plays a role in numerous physiological processes including regulation of energy metabolism, neurite outgrowth or cell migration. Promotes self-renewal and neuronal differentiation of neural progenitor cells through activation of the NOTCH and WNT/beta-catenin signaling pathways. Modulates the KAT5-dependent glucocorticoid receptor signaling by modulating KAT5 subcellular compartmentalisation. Also plays a role in the activation TGFBR1 in the absence of TGFBR2 by interfering with FKBP1A binding to TGFBR1, leading to induction of both canonical and non-canonical SMAD signaling pathways resulting in inhibition of proliferation or promotion of migration. This Mus musculus (Mouse) protein is Melatonin-related receptor (Gpr50).